The following is a 549-amino-acid chain: Lipase 5 (549 aa).

A signal peptide spans M1–A15. An intrachain disulfide couples C75 to C112. The active-site Acyl-ester intermediate is the S224. C283 and C292 form a disulfide bridge. An N-linked (GlcNAc...) asparagine glycan is attached at N329. Catalysis depends on E356, which acts as the Charge relay system. N-linked (GlcNAc...) asparagine glycosylation is present at N366. H464 serves as the catalytic Charge relay system.

This sequence belongs to the type-B carboxylesterase/lipase family.

It catalyses the reaction a triacylglycerol + H2O = a diacylglycerol + a fatty acid + H(+). The sequence is that of Lipase 5 (LIP5) from Diutina rugosa (Yeast).